Consider the following 203-residue polypeptide: Dephospho-CoA kinase (203 aa).

Residues 6 to 203 (RLGITGGIAC…SLLGRGGKGG (198 aa)) form the DPCK domain. ATP is bound at residue 14 to 19 (ACGKSV).

Belongs to the CoaE family.

It localises to the cytoplasm. The catalysed reaction is 3'-dephospho-CoA + ATP = ADP + CoA + H(+). It functions in the pathway cofactor biosynthesis; coenzyme A biosynthesis; CoA from (R)-pantothenate: step 5/5. Functionally, catalyzes the phosphorylation of the 3'-hydroxyl group of dephosphocoenzyme A to form coenzyme A. The polypeptide is Dephospho-CoA kinase (Thermosynechococcus vestitus (strain NIES-2133 / IAM M-273 / BP-1)).